The primary structure comprises 128 residues: Glycine cleavage system H protein (128 aa).

Residues 22–104 (VATVGITEHA…YGEGWIFKMK (83 aa)) enclose the Lipoyl-binding domain. Position 63 is an N6-lipoyllysine (K63).

This sequence belongs to the GcvH family. As to quaternary structure, the glycine cleavage system is composed of four proteins: P, T, L and H. It depends on (R)-lipoate as a cofactor.

In terms of biological role, the glycine cleavage system catalyzes the degradation of glycine. The H protein shuttles the methylamine group of glycine from the P protein to the T protein. This is Glycine cleavage system H protein from Methylacidiphilum infernorum (isolate V4) (Methylokorus infernorum (strain V4)).